The primary structure comprises 180 residues: Translation initiation factor IF-3 (180 aa).

This sequence belongs to the IF-3 family. In terms of assembly, monomer.

The protein resides in the cytoplasm. In terms of biological role, IF-3 binds to the 30S ribosomal subunit and shifts the equilibrium between 70S ribosomes and their 50S and 30S subunits in favor of the free subunits, thus enhancing the availability of 30S subunits on which protein synthesis initiation begins. The protein is Translation initiation factor IF-3 of Hyphomonas neptunium (strain ATCC 15444).